The following is a 112-amino-acid chain: Small ribosomal subunit protein bS6 (112 aa).

Belongs to the bacterial ribosomal protein bS6 family.

Its function is as follows. Binds together with bS18 to 16S ribosomal RNA. In Chlamydia pneumoniae (Chlamydophila pneumoniae), this protein is Small ribosomal subunit protein bS6 (rpsF).